Reading from the N-terminus, the 416-residue chain is (S)-ureidoglycine--glyoxylate transaminase (416 aa).

N6-(pyridoxal phosphate)lysine is present on Lys-198.

It belongs to the class-V pyridoxal-phosphate-dependent aminotransferase family. As to quaternary structure, homodimer. It depends on pyridoxal 5'-phosphate as a cofactor.

It carries out the reaction (S)-2-ureidoglycine + glyoxylate = N-carbamoyl-2-oxoglycine + glycine. Its pathway is nitrogen metabolism; (S)-allantoin degradation. Functionally, catalyzes the transamination between an unstable intermediate ((S)-ureidoglycine) and the end product of purine catabolism (glyoxylate) to yield oxalurate and glycine. Glyoxylate is the preferred substrate, but other amino-group acceptors can be used. In Bacillus subtilis (strain 168), this protein is (S)-ureidoglycine--glyoxylate transaminase.